A 215-amino-acid polypeptide reads, in one-letter code: Pre-hexon-linking protein VIII (215 aa).

Phosphothreonine; by host is present on T62. Positions 110–150 are excised as a propeptide; that stretch reads AWINYKNGSVRYEAPLQLAEEQVGGPLNAFAIKHQLQLAGG.

Belongs to the adenoviridae hexon-linking protein family. As to quaternary structure, interacts with the peripentonal hexons as well as the hexons in the facets. Part of a complex composed of the core-capsid bridging protein, the endosome lysis protein VI and the hexon-linking protein VIII; these interactions bridge the virus core to the capsid. In terms of processing, cleaved by the viral protease during virion maturation. May cause the middle segment to be shed from the capsid.

The protein localises to the virion. The protein resides in the host nucleus. In terms of biological role, structural component of the virion that acts as a cement protein on the capsid interior and which glue the peripentonal hexons and group-of-nine hexons together. In Murine adenovirus A serotype 1 (MAdV-1), this protein is Pre-hexon-linking protein VIII.